A 503-amino-acid chain; its full sequence is D-alanine--D-alanyl carrier protein ligase (503 aa).

Residue 151–152 (TS) coordinates ATP. A D-alanine-binding site is contributed by D196. 291–296 (NTYGPT) lines the ATP pocket. V300 is a binding site for D-alanine. ATP contacts are provided by residues D382, 393–396 (YNGR), and K491. K491 provides a ligand contact to D-alanine.

This sequence belongs to the ATP-dependent AMP-binding enzyme family. DltA subfamily.

The protein resides in the cytoplasm. The catalysed reaction is holo-[D-alanyl-carrier protein] + D-alanine + ATP = D-alanyl-[D-alanyl-carrier protein] + AMP + diphosphate. The protein operates within cell wall biogenesis; lipoteichoic acid biosynthesis. In terms of biological role, catalyzes the first step in the D-alanylation of lipoteichoic acid (LTA), the activation of D-alanine and its transfer onto the D-alanyl carrier protein (Dcp) DltC. In an ATP-dependent two-step reaction, forms a high energy D-alanyl-AMP intermediate, followed by transfer of the D-alanyl residue as a thiol ester to the phosphopantheinyl prosthetic group of the Dcp. D-alanylation of LTA plays an important role in modulating the properties of the cell wall in Gram-positive bacteria, influencing the net charge of the cell wall. This chain is D-alanine--D-alanyl carrier protein ligase, found in Bacillus anthracis (strain A0248).